The primary structure comprises 375 residues: tRNA-specific 2-thiouridylase MnmA (375 aa).

ATP is bound by residues 13–20 and Met-39; that span reads AMSGGVDS. The active-site Nucleophile is the Cys-111. Cys-111 and Cys-208 are oxidised to a cystine. Gly-135 provides a ligand contact to ATP. The segment at 158 to 160 is interaction with tRNA; that stretch reads KDQ. The active-site Cysteine persulfide intermediate is Cys-208. Residues 313-314 are interaction with tRNA; that stretch reads RY.

This sequence belongs to the MnmA/TRMU family.

The protein localises to the cytoplasm. The catalysed reaction is S-sulfanyl-L-cysteinyl-[protein] + uridine(34) in tRNA + AH2 + ATP = 2-thiouridine(34) in tRNA + L-cysteinyl-[protein] + A + AMP + diphosphate + H(+). Functionally, catalyzes the 2-thiolation of uridine at the wobble position (U34) of tRNA, leading to the formation of s(2)U34. This is tRNA-specific 2-thiouridylase MnmA from Geotalea uraniireducens (strain Rf4) (Geobacter uraniireducens).